Here is a 186-residue protein sequence, read N- to C-terminus: Large ribosomal subunit protein uL10 (186 aa).

Belongs to the universal ribosomal protein uL10 family. Part of the ribosomal stalk of the 50S ribosomal subunit. The N-terminus interacts with L11 and the large rRNA to form the base of the stalk. The C-terminus forms an elongated spine to which L12 dimers bind in a sequential fashion forming a multimeric L10(L12)X complex.

Forms part of the ribosomal stalk, playing a central role in the interaction of the ribosome with GTP-bound translation factors. This chain is Large ribosomal subunit protein uL10, found in Rhodococcus jostii (strain RHA1).